An 80-amino-acid polypeptide reads, in one-letter code: Serine palmitoyltransferase small subunit B (80 aa).

The Cytoplasmic segment spans residues 1 to 11 (MDVKHIKDYLS). The helical transmembrane segment at 12–29 (WLYYQYLLITCSYVLEPW) threads the bilayer. Topologically, residues 30–36 (EQSIFNT) are lumenal. Residues 37-57 (LLLTIIAMVIYSSYIFIPIHV) form a helical membrane-spanning segment. Over 58-80 (RLAVEFFSGIFGGQHESTVALMS) the chain is Cytoplasmic.

It belongs to the SPTSS family. SPTSSB subfamily. As to quaternary structure, component of the serine palmitoyltransferase (SPT) complex, which is composed of SPTLC1, SPTLC2 or SPTLC3 and SPTSSA or SPTSSB. The heterodimer consisting of SPTLC1 and SPTLC2/SPTLC3 forms the catalytic core of the enzyme, while SPTSSA or SPTSSB subunits determine substrate specificity. SPT also interacts with ORMDL proteins, especially ORMDL3, which negatively regulate SPT activity in the presence of ceramides.

The protein resides in the endoplasmic reticulum membrane. The protein operates within lipid metabolism; sphingolipid metabolism. Its function is as follows. Component of the serine palmitoyltransferase multisubunit enzyme (SPT) that catalyzes the initial and rate-limiting step in sphingolipid biosynthesis by condensing L-serine and activated acyl-CoA (most commonly palmitoyl-CoA) to form long-chain bases. The SPT complex is composed of SPTLC1, SPTLC2 or SPTLC3 and SPTSSA or SPTSSB. Within this complex, the heterodimer consisting of SPTLC1 and SPTLC2/SPTLC3 forms the catalytic core. Within the SPT complex, SPTSSB stimulates the catalytic activity and plays a role in substrate specificity. SPT complexes with this subunit showing a preference for longer acyl-CoAs. The SPTLC1-SPTLC2-SPTSSB complex shows a strong preference for C18-CoA substrate, while the SPTLC1-SPTLC3-SPTSSB isozyme displays an ability to use a broader range of acyl-CoAs, without apparent preference. This chain is Serine palmitoyltransferase small subunit B (sptssb), found in Xenopus tropicalis (Western clawed frog).